The chain runs to 391 residues: Ectodysplasin-A (391 aa).

Residues 1–41 (MGYPEVERRELLPAAAPRERGSQGCGCGGAPARAGEGNSCL) lie on the Cytoplasmic side of the membrane. The helical; Signal-anchor for type II membrane protein transmembrane segment at 42–62 (LFLGFFGLSLALHLLTLCCYL) threads the bilayer. Residues 63-391 (ELRSELRRER…AIRLGEAPAS (329 aa)) are Extracellular-facing. Disordered regions lie at residues 73 to 127 (GAES…HSDS) and 146 to 245 (YSEE…GTRE). A compositionally biased stretch (low complexity) spans 86–101 (TSGTLSSLGGLDPDSP). Polar residues predominate over residues 102 to 113 (ITSHLGQPSPKQ). The region spanning 180-229 (GPPGPNGPPGPPGPPGPQGPPGIPGIPGIPGTTVMGPPGPPGPPGPQGPP) is the Collagen-like domain. Composition is skewed to pro residues over residues 181-203 (PPGPNGPPGPPGPPGPQGPPGIP) and 216-228 (PPGPPGPPGPQGP). The THD domain maps to 249–385 (AVVHLQGQGS…HTTFFGAIRL (137 aa)). N-linked (GlcNAc...) asparagine glycosylation is present at Asn-313. A disulfide bridge connects residues Cys-332 and Cys-346. A glycan (N-linked (GlcNAc...) asparagine) is linked at Asn-372.

The protein belongs to the tumor necrosis factor family. As to quaternary structure, homotrimer. The homotrimers may then dimerize and form higher-order oligomers. N-glycosylated. In terms of processing, processing by furin produces a secreted form. In terms of tissue distribution, not abundant; expressed in specific cell types of ectodermal (but not mesodermal) origin of keratinocytes, hair follicles, sweat glands. Also in adult heart, liver, muscle, pancreas, prostate, fetal liver, uterus, small intestine and umbilical cord.

Its subcellular location is the cell membrane. It is found in the secreted. Functionally, cytokine which is involved in epithelial-mesenchymal signaling during morphogenesis of ectodermal organs. Functions as a ligand activating the DEATH-domain containing receptors EDAR and EDA2R. May also play a role in cell adhesion. Binds only to the receptor EDAR, while isoform 3 binds exclusively to the receptor EDA2R. Its function is as follows. Binds only to the receptor EDA2R. This chain is Ectodysplasin-A (EDA), found in Homo sapiens (Human).